Here is a 348-residue protein sequence, read N- to C-terminus: Protein RecA (348 aa).

65-72 (GPESSGKT) contributes to the ATP binding site.

This sequence belongs to the RecA family.

Its subcellular location is the cytoplasm. Its function is as follows. Can catalyze the hydrolysis of ATP in the presence of single-stranded DNA, the ATP-dependent uptake of single-stranded DNA by duplex DNA, and the ATP-dependent hybridization of homologous single-stranded DNAs. It interacts with LexA causing its activation and leading to its autocatalytic cleavage. The polypeptide is Protein RecA (Vibrio anguillarum (strain ATCC 68554 / 775) (Listonella anguillarum)).